The primary structure comprises 546 residues: Chaperonin GroEL 1 (546 aa).

ATP-binding positions include 30-33, lysine 51, 87-91, glycine 415, and aspartate 495; these read TLGP and DGTTT. The disordered stretch occupies residues 527 to 546; it reads DAAPTAAPGGPGAGGPGFDF. Residues 535–546 are compositionally biased toward gly residues; sequence GGPGAGGPGFDF.

Belongs to the chaperonin (HSP60) family. In terms of assembly, forms a cylinder of 14 subunits composed of two heptameric rings stacked back-to-back. Interacts with the co-chaperonin GroES.

The protein resides in the cytoplasm. It carries out the reaction ATP + H2O + a folded polypeptide = ADP + phosphate + an unfolded polypeptide.. In terms of biological role, together with its co-chaperonin GroES, plays an essential role in assisting protein folding. The GroEL-GroES system forms a nano-cage that allows encapsulation of the non-native substrate proteins and provides a physical environment optimized to promote and accelerate protein folding. The protein is Chaperonin GroEL 1 of Burkholderia lata (strain ATCC 17760 / DSM 23089 / LMG 22485 / NCIMB 9086 / R18194 / 383).